A 554-amino-acid polypeptide reads, in one-letter code: Chaperonin GroEL (554 aa).

Residues threonine 30–proline 33, lysine 51, aspartate 87–threonine 91, glycine 416, and aspartate 503 each bind ATP.

Belongs to the chaperonin (HSP60) family. In terms of assembly, forms a cylinder of 14 subunits composed of two heptameric rings stacked back-to-back. Interacts with the co-chaperonin GroES.

The protein localises to the cytoplasm. The enzyme catalyses ATP + H2O + a folded polypeptide = ADP + phosphate + an unfolded polypeptide.. Functionally, together with its co-chaperonin GroES, plays an essential role in assisting protein folding. The GroEL-GroES system forms a nano-cage that allows encapsulation of the non-native substrate proteins and provides a physical environment optimized to promote and accelerate protein folding. This chain is Chaperonin GroEL, found in Holospora obtusa.